The chain runs to 284 residues: Aliphatic sulfonates import ATP-binding protein SsuB (284 aa).

The ABC transporter domain occupies 21–242 (LRIAHAVKRY…HRGAPAFARL (222 aa)). ATP is bound at residue 53 to 60 (GRSGCGKS).

It belongs to the ABC transporter superfamily. Aliphatic sulfonates importer (TC 3.A.1.17.2) family. As to quaternary structure, the complex is composed of two ATP-binding proteins (SsuB), two transmembrane proteins (SsuC) and a solute-binding protein (SsuA).

Its subcellular location is the cell inner membrane. The enzyme catalyses ATP + H2O + aliphatic sulfonate-[sulfonate-binding protein]Side 1 = ADP + phosphate + aliphatic sulfonateSide 2 + [sulfonate-binding protein]Side 1.. Its function is as follows. Part of the ABC transporter complex SsuABC involved in aliphatic sulfonates import. Responsible for energy coupling to the transport system. This chain is Aliphatic sulfonates import ATP-binding protein SsuB, found in Ralstonia nicotianae (strain ATCC BAA-1114 / GMI1000) (Ralstonia solanacearum).